Consider the following 256-residue polypeptide: Cell division protein DivIB (256 aa).

Over 1-23 (MSKDLISTDEYIKIKKKRKRIKK) the chain is Cytoplasmic. A helical transmembrane segment spans residues 24–44 (IVVLFIFLISILVTLCLKIPY). In terms of domain architecture, POTRA spans 45–113 (FNIESIEIKG…NKLEIYVKER (69 aa)). Topologically, residues 45-256 (FNIESIEIKG…EGNPVFYIEK (212 aa)) are extracellular.

The protein belongs to the FtsQ/DivIB family. DivIB subfamily.

The protein localises to the cell membrane. In terms of biological role, cell division protein that may be involved in stabilizing or promoting the assembly of the division complex. The chain is Cell division protein DivIB from Clostridium botulinum (strain Loch Maree / Type A3).